The chain runs to 197 residues: Nucleoside triphosphate pyrophosphatase (197 aa).

Aspartate 70 (proton acceptor) is an active-site residue.

It belongs to the Maf family. The cofactor is a divalent metal cation.

It is found in the cytoplasm. It carries out the reaction a ribonucleoside 5'-triphosphate + H2O = a ribonucleoside 5'-phosphate + diphosphate + H(+). It catalyses the reaction a 2'-deoxyribonucleoside 5'-triphosphate + H2O = a 2'-deoxyribonucleoside 5'-phosphate + diphosphate + H(+). In terms of biological role, nucleoside triphosphate pyrophosphatase. May have a dual role in cell division arrest and in preventing the incorporation of modified nucleotides into cellular nucleic acids. The polypeptide is Nucleoside triphosphate pyrophosphatase (yhdE) (Shigella flexneri).